A 157-amino-acid chain; its full sequence is NADPH-dependent 7-cyano-7-deazaguanine reductase (157 aa).

Cysteine 55 functions as the Thioimide intermediate in the catalytic mechanism. Catalysis depends on aspartate 62, which acts as the Proton donor. Residues 77–79 (VES) and 96–97 (HE) each bind substrate.

This sequence belongs to the GTP cyclohydrolase I family. QueF type 1 subfamily.

Its subcellular location is the cytoplasm. It catalyses the reaction 7-aminomethyl-7-carbaguanine + 2 NADP(+) = 7-cyano-7-deazaguanine + 2 NADPH + 3 H(+). Its pathway is tRNA modification; tRNA-queuosine biosynthesis. Catalyzes the NADPH-dependent reduction of 7-cyano-7-deazaguanine (preQ0) to 7-aminomethyl-7-deazaguanine (preQ1). The polypeptide is NADPH-dependent 7-cyano-7-deazaguanine reductase (Neisseria meningitidis serogroup C / serotype 2a (strain ATCC 700532 / DSM 15464 / FAM18)).